The sequence spans 156 residues: ATP synthase subunit b (156 aa).

Residues 7-29 (LFAQMVVFLVLAWFTMKFVWPPL) form a helical membrane-spanning segment.

The protein belongs to the ATPase B chain family. In terms of assembly, F-type ATPases have 2 components, F(1) - the catalytic core - and F(0) - the membrane proton channel. F(1) has five subunits: alpha(3), beta(3), gamma(1), delta(1), epsilon(1). F(0) has three main subunits: a(1), b(2) and c(10-14). The alpha and beta chains form an alternating ring which encloses part of the gamma chain. F(1) is attached to F(0) by a central stalk formed by the gamma and epsilon chains, while a peripheral stalk is formed by the delta and b chains.

It is found in the cell inner membrane. In terms of biological role, f(1)F(0) ATP synthase produces ATP from ADP in the presence of a proton or sodium gradient. F-type ATPases consist of two structural domains, F(1) containing the extramembraneous catalytic core and F(0) containing the membrane proton channel, linked together by a central stalk and a peripheral stalk. During catalysis, ATP synthesis in the catalytic domain of F(1) is coupled via a rotary mechanism of the central stalk subunits to proton translocation. Its function is as follows. Component of the F(0) channel, it forms part of the peripheral stalk, linking F(1) to F(0). This is ATP synthase subunit b from Burkholderia pseudomallei (strain 668).